Reading from the N-terminus, the 562-residue chain is Vacuolar basic amino acid transporter 1 (562 aa).

The Vacuolar segment spans residues 1–30 (MQTLDETSNLLPPPEEAEAPPLEQKFHEYN). A helical membrane pass occupies residues 31–51 (LALPKFPILFSLWLGSFLSSL). The Cytoplasmic segment spans residues 52–100 (DSTIVANIMNRVAEEFSESSKKQWIATSFLLTNTAFQPLYGKLSDITGR). Residues 101–121 (KSALLTAQFFFGLGCLLTCFA) traverse the membrane as a helical segment. Residues 122–131 (RNVTEFSIAR) are Vacuolar-facing. The N-linked (GlcNAc...) asparagine glycan is linked to N123. Residues 132-152 (AICGIGAGGLNAISSIAVSDI) traverse the membrane as a helical segment. Residues 153-166 (CTARERGVYQGYAN) lie on the Cytoplasmic side of the membrane. The chain crosses the membrane as a helical span at residues 167 to 187 (IVFGFGQLLGAPLGGVFIETI). The Vacuolar portion of the chain corresponds to 188-190 (GWR). A helical membrane pass occupies residues 191–211 (ALFGIQVPVIMLCSVLAIKNI). The Cytoplasmic portion of the chain corresponds to 212–232 (NIKLFHVPPMKERYTLKNLSR). The helical transmembrane segment at 233–253 (IDIFGSLSLVATISGVLFLCS) threads the bilayer. Over 254-255 (SQ) the chain is Vacuolar. A helical membrane pass occupies residues 256 to 276 (LNKLYLALFTIGSFIVFILVE). Topologically, residues 277 to 292 (RYYATEKILPFELLTR) are cytoplasmic. A helical membrane pass occupies residues 293-313 (SFCLSSAVTVISSFVVFGEIF). Over 314–331 (RSPIYLQLLQNISVTKTG) the chain is Vacuolar. The N-linked (GlcNAc...) asparagine glycan is linked to N324. A helical membrane pass occupies residues 332–352 (LFLIFPSISVAVGSLVTGWVL). The Cytoplasmic segment spans residues 353–365 (RNTKINLAHCAYQ). Residues 366 to 386 (IIFGGMIMQLLGLGLGYFLLS) form a helical membrane-spanning segment. Residues 387–419 (HLNPDYTIYDMLESITFRSNSIWWKLIYVFASV) lie on the Vacuolar side of the membrane. A helical membrane pass occupies residues 420-440 (LVSFGYACLLVATLVSIVFTV). At 441–448 (EKSQQGTM) the chain is on the cytoplasmic side. The helical transmembrane segment at 449 to 469 (TGVFYLWRSIGNVLGASLTLV) threads the bilayer. At 470-528 (SYENSLSSMLWNYMFKTKRDDEYHFTKKQYYSLINDSSYLRGPNFPTDIFVRILDVYKK) the chain is on the vacuolar side. Residue N504 is glycosylated (N-linked (GlcNAc...) asparagine). The helical transmembrane segment at 529-549 (AFLISYIPNIALAAVGIVLSL) threads the bilayer. Over 550-562 (YLVKHTYKRSSSS) the chain is Cytoplasmic.

It belongs to the major facilitator superfamily.

It localises to the vacuole membrane. Its function is as follows. Transporter required for vacuolar uptake of at least histidine and lysine. This chain is Vacuolar basic amino acid transporter 1 (VBA1), found in Saccharomyces cerevisiae (strain ATCC 204508 / S288c) (Baker's yeast).